A 483-amino-acid polypeptide reads, in one-letter code: Glycogen synthase (483 aa).

Residue Lys-15 coordinates ADP-alpha-D-glucose.

Belongs to the glycosyltransferase 1 family. Bacterial/plant glycogen synthase subfamily.

The catalysed reaction is [(1-&gt;4)-alpha-D-glucosyl](n) + ADP-alpha-D-glucose = [(1-&gt;4)-alpha-D-glucosyl](n+1) + ADP + H(+). Its pathway is glycan biosynthesis; glycogen biosynthesis. Synthesizes alpha-1,4-glucan chains using ADP-glucose. This is Glycogen synthase from Desulfatibacillum aliphaticivorans.